Reading from the N-terminus, the 495-residue chain is MSESNELIEQRIQKIEELKKQGINPYPVRFFPDSKSKDIAEKFEKNPTGPETKFKLGGRLHSKRVMGKASFAHLKDNSGIIQLYATKDDLGETQYSIFKSLDLGDIIGLEGYLFKTQKGEITLHVTSVELLSKCIRPLPVVKEKDGVVYDAFADVEQRYRMRYVDLIVNDHVRDTFITRSKIVSEIRSFLTQEGFLEVETPMMQPIAGGAAARPFVTHHNTLDMQLFLRIAPELYLKRLIVGGMDRVFELNRNFRNEGISTKHNPEFTMMEAYMAFGDMSTMLDLTERLITHLAQKICGTLKIQYGKDLIDLSPPWKRTTYVDIIKEYSGIDFSQIISLEEAKKKASELKVDVSKCQTIWKVADEVFSEKAEPNLIQPIFITDYPKELSPLAKSNPDKPGYVERFEPYVAGREIGNAFTELNDPFDQKERFEDQVKQREAGDDEAFMMDEDYIRALEYGMPPTGGLGIGIDRLVMLLTNSHSIRDTILFPLMRPE.

2 residues coordinate Mg(2+): Glu406 and Glu413.

Belongs to the class-II aminoacyl-tRNA synthetase family. In terms of assembly, homodimer. Mg(2+) is required as a cofactor.

The protein localises to the cytoplasm. It catalyses the reaction tRNA(Lys) + L-lysine + ATP = L-lysyl-tRNA(Lys) + AMP + diphosphate. The chain is Lysine--tRNA ligase from Leptospira interrogans serogroup Icterohaemorrhagiae serovar copenhageni (strain Fiocruz L1-130).